The primary structure comprises 469 residues: MGQVLPVFAHCKEAPSTASSTPDSTEGGNDDSDFRELHTAREFSEDEEEETTSQDWGTPRELTFSYIAFDGVVGSGGRRDSVVRRPRPQGRSVSEPRDPPPQPSLGDSLESIPSLSQSPEPGRRGDPDTVPPAERPLEELRLRLDQLGWAVRSAGSGEDSATSSSTPLENEEPDGLEASEAGETNLELRLAQPLHLQFEGLTPQLSPSSGIPQAHTPSPQRSQDLNTGPDEPLPNGEGEHWRLLEQEPITAQCLNSTDQSEFTLEPLLLVADLLYWKDTRTSGAIFTGLMASLLCLLHFSIVSVAAHLALLGLCATISLRVYRKVLQAVHRGDGTNPFQAYLDMDLTLTREQTERLSQQIASHVVSTATQLRHFFLVEDLVDSLKLALLFYILTFVGAIFNGLTLVILGVVALFTVPLLYRQHQAQIDQYVGLVTSQLSHIKAKIRAKIPGTGTLAPAASVSGSKAKAE.

2 disordered regions span residues Met-1–Glu-180 and Leu-201–Gly-238. Over residues Ala-14–Thr-25 the composition is skewed to low complexity. The span at Ser-32–Phe-43 shows a compositional bias: basic and acidic residues. Ser-44 carries the post-translational modification Phosphoserine. A compositionally biased stretch (basic and acidic residues) spans Arg-135 to Leu-144. Polar residues-rich tracts occupy residues Asp-159 to Leu-168 and Pro-203 to Asn-226. A Reticulon domain is found at Val-270–Glu-469. The next 2 helical transmembrane spans lie at Leu-293–Leu-313 and Leu-388–Leu-408.

Interacts with SPAST. Interacts with BACE1. Interacts (via first transmembrane domain) with ARL6IP5/GTRAP3-18. Interacts (via N-terminus) with SLC1A1/EAAC1; the interaction promotes cell surface expression of SLC1A1. As to expression, expressed in brain and spinal cord (at protein level). In the embryonic brain cortex, expressed in neurons but not in astrocytes (at protein level).

It is found in the endoplasmic reticulum membrane. Its subcellular location is the sarcoplasmic reticulum membrane. The protein resides in the cell membrane. It localises to the sarcolemma. The protein localises to the T-tubule. It is found in the cytoplasm. Its subcellular location is the myofibril. The protein resides in the sarcomere. It localises to the z line. The protein localises to the cytoskeleton. Inhibits amyloid precursor protein processing, probably by blocking BACE1 activity. Enhances trafficking of the glutamate transporter SLC1A1/EAAC1 from the endoplasmic reticulum to the cell surface. Plays a role in the translocation of SLC2A4/GLUT4 from intracellular membranes to the cell membrane which facilitates the uptake of glucose into the cell. The sequence is that of Reticulon-2 from Rattus norvegicus (Rat).